The primary structure comprises 361 residues: MLLELARWLQQLESLFGLFNYLTFRGILAALTALFLSLWMGPAVIRKLAQFKGGQPIRQDGPQTHFSKAGTPTMGGSLILLTVTLSVLLWGDLRNRYVWLVLAVMICFGAIGWYDDWIKIVKRDPNGLKSRWKYLLQSIFGLAAGLFLYYTADVPAAITFYIPMFKSIALPLAGVSFVVIAYFWIVGFSNAVNLTDGLDGLAIMPTVLVACALGVFAYASGNVVFAEYLKIPLIPGAGELIIICSAIAGAGLGFLWFNTYPAMVFMGDIGALSLGAVLGTIAVIVRQEMVLVIMGGVFVIETLSVMIQVASFKLTGKRVFRMAPIHHHFELKGWPEPRVIVRFWIISVVLVLIGLATLKVR.

Helical transmembrane passes span 25-45, 73-93, 98-118, 139-159, 168-188, 200-220, 237-257, 264-284, 289-309, and 339-359; these read RGILAALTALFLSLWMGPAVI, TMGGSLILLTVTLSVLLWGDL, VWLVLAVMICFGAIGWYDDWI, IFGLAAGLFLYYTADVPAAIT, IALPLAGVSFVVIAYFWIVGF, GLAIMPTVLVACALGVFAYAS, AGELIIICSAIAGAGLGFLWF, VFMGDIGALSLGAVLGTIAVI, MVLVIMGGVFVIETLSVMIQV, and VIVRFWIISVVLVLIGLATLK.

It belongs to the glycosyltransferase 4 family. MraY subfamily. Requires Mg(2+) as cofactor.

The protein resides in the cell inner membrane. It carries out the reaction UDP-N-acetyl-alpha-D-muramoyl-L-alanyl-gamma-D-glutamyl-meso-2,6-diaminopimeloyl-D-alanyl-D-alanine + di-trans,octa-cis-undecaprenyl phosphate = di-trans,octa-cis-undecaprenyl diphospho-N-acetyl-alpha-D-muramoyl-L-alanyl-D-glutamyl-meso-2,6-diaminopimeloyl-D-alanyl-D-alanine + UMP. Its pathway is cell wall biogenesis; peptidoglycan biosynthesis. Catalyzes the initial step of the lipid cycle reactions in the biosynthesis of the cell wall peptidoglycan: transfers peptidoglycan precursor phospho-MurNAc-pentapeptide from UDP-MurNAc-pentapeptide onto the lipid carrier undecaprenyl phosphate, yielding undecaprenyl-pyrophosphoryl-MurNAc-pentapeptide, known as lipid I. In Xanthomonas axonopodis pv. citri (strain 306), this protein is Phospho-N-acetylmuramoyl-pentapeptide-transferase.